Consider the following 345-residue polypeptide: Cytoskeleton protein RodZ (345 aa).

Over 1 to 111 the chain is Cytoplasmic; sequence MNTEASQDQT…LGKKHKKRDG (111 aa). An HTH cro/C1-type domain is found at 19–79; the sequence is LRQARESLGL…KLVHLPEDEL (61 aa). The H-T-H motif DNA-binding region spans 30–49; that stretch reads QQTVAERLCLKVSTIRDIEE. The chain crosses the membrane as a helical; Signal-anchor for type II membrane protein span at residues 112–132; sequence WLMSFTWLIVLVVLGLTGAWW. Residues 133-345 lie on the Periplasmic side of the membrane; that stretch reads WQNHQAQQAE…RVARLTVCVE (213 aa). The segment at 151–259 is disordered; the sequence is SAQLSQNGGQ…PLPTADAGVS (109 aa). Residues 188 to 225 show a composition bias toward polar residues; that stretch reads PLTNHSGSAITNSATTSSVPKTTSTEPVDTANTNTTMH. The segment covering 229 to 241 has biased composition (low complexity); the sequence is AASAAVSPSQVPQ.

This sequence belongs to the RodZ family.

The protein resides in the cell inner membrane. Its function is as follows. Cytoskeletal protein that is involved in cell-shape control through regulation of the length of the long axis. This Yersinia pestis bv. Antiqua (strain Antiqua) protein is Cytoskeleton protein RodZ.